The following is a 393-amino-acid chain: NAD(P)H-quinone oxidoreductase subunit H, chloroplastic (393 aa).

It belongs to the complex I 49 kDa subunit family. In terms of assembly, NDH is composed of at least 16 different subunits, 5 of which are encoded in the nucleus.

It is found in the plastid. It localises to the chloroplast thylakoid membrane. The enzyme catalyses a plastoquinone + NADH + (n+1) H(+)(in) = a plastoquinol + NAD(+) + n H(+)(out). The catalysed reaction is a plastoquinone + NADPH + (n+1) H(+)(in) = a plastoquinol + NADP(+) + n H(+)(out). In terms of biological role, NDH shuttles electrons from NAD(P)H:plastoquinone, via FMN and iron-sulfur (Fe-S) centers, to quinones in the photosynthetic chain and possibly in a chloroplast respiratory chain. The immediate electron acceptor for the enzyme in this species is believed to be plastoquinone. Couples the redox reaction to proton translocation, and thus conserves the redox energy in a proton gradient. The chain is NAD(P)H-quinone oxidoreductase subunit H, chloroplastic from Draba nemorosa (Woodland whitlowgrass).